The chain runs to 688 residues: Translation initiation factor IF-2 (688 aa).

A disordered region spans residues 54–95; the sequence is KEKSEKTKEEDDEIETTAKNPIKESTNNKKPNKRDDKNEKVN. The span at 86-95 shows a compositional bias: basic and acidic residues; it reads KRDDKNEKVN. One can recognise a tr-type G domain in the interval 187–354; sequence KRSPIITVMG…MILLSSEILE (168 aa). Positions 196–203 are G1; the sequence is GHVDHGKT. 196–203 contributes to the GTP binding site; the sequence is GHVDHGKT. Residues 221 to 225 are G2; it reads GITQH. A G3 region spans residues 242–245; sequence DTPG. Residues 242–246 and 296–299 each bind GTP; these read DTPGH and NKID. Residues 296 to 299 are G4; the sequence is NKID. Residues 332–334 are G5; sequence SAH.

This sequence belongs to the TRAFAC class translation factor GTPase superfamily. Classic translation factor GTPase family. IF-2 subfamily.

It is found in the cytoplasm. One of the essential components for the initiation of protein synthesis. Protects formylmethionyl-tRNA from spontaneous hydrolysis and promotes its binding to the 30S ribosomal subunits. Also involved in the hydrolysis of GTP during the formation of the 70S ribosomal complex. In Clostridium botulinum (strain Okra / Type B1), this protein is Translation initiation factor IF-2.